The sequence spans 206 residues: Cytidylate kinase (206 aa).

9-17 (GPAAAGKGT) is an ATP binding site.

It belongs to the cytidylate kinase family. Type 1 subfamily.

The protein localises to the cytoplasm. It carries out the reaction CMP + ATP = CDP + ADP. It catalyses the reaction dCMP + ATP = dCDP + ADP. The chain is Cytidylate kinase from Cereibacter sphaeroides (strain ATCC 17023 / DSM 158 / JCM 6121 / CCUG 31486 / LMG 2827 / NBRC 12203 / NCIMB 8253 / ATH 2.4.1.) (Rhodobacter sphaeroides).